Here is a 485-residue protein sequence, read N- to C-terminus: E3 ubiquitin-protein ligase TRIM68 (485 aa).

Residues 16–61 (CPICMTFLREPVSISCGHTFCHSCLSGLWKLPGESQNLSYTCPLCR) form an RING-type zinc finger. Residues 93–134 (LKTDVCDLHKEQLTMFCKEDDMVTCEACKQSPEHEAHSVVPI) form a B box-type zinc finger. Residues Cys-98, His-101, Cys-120, and His-126 each coordinate Zn(2+). Residues 144–226 (KLQQALEHLR…EQEKGETASK (83 aa)) adopt a coiled-coil conformation. Residues 285–483 (LKTDCRVLGL…TPLTICTLGG (199 aa)) form the B30.2/SPRY domain.

The protein belongs to the TRIM/RBCC family. As to quaternary structure, interacts with AR/androgen receptor (via ligand-binding domain). Interacts with KAT5/TIP60. In terms of processing, auto-ubiquitinated.

It localises to the cytoplasm. Its subcellular location is the perinuclear region. It is found in the nucleus. It catalyses the reaction S-ubiquitinyl-[E2 ubiquitin-conjugating enzyme]-L-cysteine + [acceptor protein]-L-lysine = [E2 ubiquitin-conjugating enzyme]-L-cysteine + N(6)-ubiquitinyl-[acceptor protein]-L-lysine.. The protein operates within protein modification; protein ubiquitination. In terms of biological role, functions as a ubiquitin E3 ligase. Acts as a coactivator of androgen receptor (AR) depending on its ubiquitin ligase activity. This Mus musculus (Mouse) protein is E3 ubiquitin-protein ligase TRIM68 (Trim68).